The chain runs to 464 residues: 17,18-epoxy-17-hydroxycur-19-ene N-malonyltransferase (464 aa).

Active-site proton acceptor residues include His191 and Asp403.

The protein belongs to the plant acyltransferase family. As to quaternary structure, monomer. In terms of tissue distribution, mainly expressed in roots.

The protein localises to the cytoplasm. It carries out the reaction 17,18-epoxy-17-hydroxycur-19-ene + malonyl-CoA = prestrychnine + CoA. It participates in alkaloid biosynthesis. Malonylransferase involved in the biosynthesis of curare monoterpene indole alkaloids (MIAs), natural products such as strychnine, a neurotoxic compound used as a pesticide to control rodents, and its pharmacologically active derivatives, including brucine, used to regulate blood pressure. Curare alkaloids act as animal glycine receptor antagonists. Catalyzes the conversion of 17,18-epoxy-17-hydroxycur-19-ene (Wieland-Gumlich aldehyde) to prestrychnine, which is spontaneously converted into strychnine and isostrychnine. The chain is 17,18-epoxy-17-hydroxycur-19-ene N-malonyltransferase from Strychnos nux-vomica (Poison nut).